We begin with the raw amino-acid sequence, 880 residues long: Valine--tRNA ligase (880 aa).

Residues 48–58 (PNVTGKLHLGH) carry the 'HIGH' region motif. Residues 524–528 (KMSKS) carry the 'KMSKS' region motif. ATP is bound at residue K527. Residues 808 to 879 (LAGLINIEEE…VKERIAQLRS (72 aa)) are a coiled coil.

This sequence belongs to the class-I aminoacyl-tRNA synthetase family. ValS type 1 subfamily. As to quaternary structure, monomer.

It is found in the cytoplasm. It catalyses the reaction tRNA(Val) + L-valine + ATP = L-valyl-tRNA(Val) + AMP + diphosphate. Its function is as follows. Catalyzes the attachment of valine to tRNA(Val). As ValRS can inadvertently accommodate and process structurally similar amino acids such as threonine, to avoid such errors, it has a 'posttransfer' editing activity that hydrolyzes mischarged Thr-tRNA(Val) in a tRNA-dependent manner. The chain is Valine--tRNA ligase from Enterococcus faecalis (strain ATCC 700802 / V583).